The following is a 432-amino-acid chain: Selenocysteine lyase (432 aa).

M1 bears the N-acetylmethionine mark. The tract at residues 1-20 (MDVARNGARGSVESPPNRKV) is disordered. S117 is modified (phosphoserine). K247 bears the N6-(pyridoxal phosphate)lysine mark. C375 serves as the catalytic S-selanylcysteine intermediate.

It belongs to the class-V pyridoxal-phosphate-dependent aminotransferase family. In terms of assembly, homodimer. It depends on pyridoxal 5'-phosphate as a cofactor.

It is found in the cytoplasm. The protein resides in the cytosol. It catalyses the reaction L-selenocysteine + AH2 = hydrogenselenide + L-alanine + A + H(+). In terms of biological role, catalyzes the decomposition of L-selenocysteine to L-alanine and elemental selenium. In Rattus norvegicus (Rat), this protein is Selenocysteine lyase (Scly).